Consider the following 68-residue polypeptide: U-scoloptoxin(02)-Er1a (68 aa).

Residues Met1–Thr20 form the signal peptide. Intrachain disulfides connect Cys30–Cys52, Cys38–Cys58, and Cys42–Cys60.

This sequence belongs to the invertebrate defensin family. As to expression, expressed by the venom gland.

It is found in the secreted. Its function is as follows. Antibacterial peptide mostly active against Gram-positive bacteria. This Ethmostigmus rubripes (Giant centipede) protein is U-scoloptoxin(02)-Er1a.